Reading from the N-terminus, the 89-residue chain is Probable Fe(2+)-trafficking protein (89 aa).

It belongs to the Fe(2+)-trafficking protein family.

Its function is as follows. Could be a mediator in iron transactions between iron acquisition and iron-requiring processes, such as synthesis and/or repair of Fe-S clusters in biosynthetic enzymes. The chain is Probable Fe(2+)-trafficking protein from Acinetobacter baumannii (strain SDF).